We begin with the raw amino-acid sequence, 180 residues long: MIKWTEQAEIKLPDDVQATMENNELKIKGKLGEASRIFRDNYVKAYIEGSSVKIATSKNNKYTKGIVGTWYSETKLLIEGVTKGFEYHMKIDFTHFPMRVSVRGDKLIVENFLGEKSPRSAKIVDGCKVSVKGDRITINGIDKRKIGETAANIERATYIRHFDARVFQDGIFLLKGEVNE.

It belongs to the universal ribosomal protein uL6 family. As to quaternary structure, part of the 50S ribosomal subunit.

Its function is as follows. This protein binds to the 23S rRNA, and is important in its secondary structure. It is located near the subunit interface in the base of the L7/L12 stalk, and near the tRNA binding site of the peptidyltransferase center. The chain is Large ribosomal subunit protein uL6 from Picrophilus torridus (strain ATCC 700027 / DSM 9790 / JCM 10055 / NBRC 100828 / KAW 2/3).